Here is a 485-residue protein sequence, read N- to C-terminus: NADH-quinone oxidoreductase subunit N (485 aa).

Transmembrane regions (helical) follow at residues 8–28 (LIAL…MLSI), 35–55 (FLNA…LWFV), 71–91 (GFAM…CTFA), 105–125 (FYLL…ANHL), 127–147 (ALFL…GYAF), 159–179 (YTIL…LVYA), 203–223 (LLAG…LVPF), 235–255 (PAPV…GVVM), 271–291 (IVLG…ALSQ), 297–317 (LLGY…IALQ), 326–346 (VGVY…VVSL), 373–393 (AAVM…LGFI), 408–430 (WWLV…RVAV), and 455–475 (IVVL…QPLI).

Belongs to the complex I subunit 2 family. In terms of assembly, NDH-1 is composed of 13 different subunits. Subunits NuoA, H, J, K, L, M, N constitute the membrane sector of the complex.

The protein resides in the cell inner membrane. It catalyses the reaction a quinone + NADH + 5 H(+)(in) = a quinol + NAD(+) + 4 H(+)(out). Functionally, NDH-1 shuttles electrons from NADH, via FMN and iron-sulfur (Fe-S) centers, to quinones in the respiratory chain. The immediate electron acceptor for the enzyme in this species is believed to be ubiquinone. Couples the redox reaction to proton translocation (for every two electrons transferred, four hydrogen ions are translocated across the cytoplasmic membrane), and thus conserves the redox energy in a proton gradient. The sequence is that of NADH-quinone oxidoreductase subunit N from Citrobacter koseri (strain ATCC BAA-895 / CDC 4225-83 / SGSC4696).